Reading from the N-terminus, the 264-residue chain is Protein ADMETOS (264 aa).

In terms of tissue distribution, paternally imprinted expression in the endosperm.

Product of a dosage-sensitive gene that contributes to the maintenance of paternally and maternally imprinted gene expression in the endosperm in order to balance parental contributions. Underlies postzygotic reproductive isolation by promoting triploid seed arrest in a genetic dosage-dependent manner, thus being a component of postzygotic interploidy hybridization barriers. The protein is Protein ADMETOS of Arabidopsis thaliana (Mouse-ear cress).